A 417-amino-acid chain; its full sequence is UDP-N-acetylglucosamine 1-carboxyvinyltransferase (417 aa).

Position 22-23 (Lys-22–Asn-23) interacts with phosphoenolpyruvate. Arg-92 is a binding site for UDP-N-acetyl-alpha-D-glucosamine. The Proton donor role is filled by Cys-116. 2-(S-cysteinyl)pyruvic acid O-phosphothioketal is present on Cys-116. UDP-N-acetyl-alpha-D-glucosamine contacts are provided by Asp-304 and Ile-326.

It belongs to the EPSP synthase family. MurA subfamily.

It is found in the cytoplasm. The enzyme catalyses phosphoenolpyruvate + UDP-N-acetyl-alpha-D-glucosamine = UDP-N-acetyl-3-O-(1-carboxyvinyl)-alpha-D-glucosamine + phosphate. It functions in the pathway cell wall biogenesis; peptidoglycan biosynthesis. Its function is as follows. Cell wall formation. Adds enolpyruvyl to UDP-N-acetylglucosamine. In Geobacter sulfurreducens (strain ATCC 51573 / DSM 12127 / PCA), this protein is UDP-N-acetylglucosamine 1-carboxyvinyltransferase.